Here is a 309-residue protein sequence, read N- to C-terminus: MTQQPLRGVTSLHFNQDQSCFCCAMETGVRIYNVEPLMEKGHLDHEQVGSVGLVEMLHRSNLLALVGGGSSPKFSEISVLIWDDAREGKDSKDKLVLEFTFTKPVLAVRMRHDKIVIVLRNRIYVYSFPDNPRKLFEFDTRDNPKGLCDLCPSLEKQLLVFPGHKCGSLQLVSKEKLVELRRGTDPATLYCINFSHDSSFLCASSDKGTVHIFALKDTRLNRRSALARVGKVGPMIGQYVDSQWSLASFTVPAESACICAFGRNTSKNVNSVIAICVDGTFHKYVFTPDGNCNREAFDVYLDICDDDDF.

One copy of the WD 1 repeat lies at 4 to 42 (QPLRGVTSLHFNQDQSCFCCAMETGVRIYNVEPLMEKGH). Residues 180–183 (LRRG) carry the L/FRRG motif motif. One copy of the WD 2 repeat lies at 184–223 (TDPATLYCINFSHDSSFLCASSDKGTVHIFALKDTRLNRR).

Belongs to the WD repeat PROPPIN family. In terms of assembly, interacts with WIPI1. Interacts with WIPI2. Interacts with ATG2A and ATG2B. Interacts with ULK1. May interact with the PRKAA1, PRKAA2, PRKAB1 and PRKAG1 subunits of the AMPK kinase. May interact with NUDC.

Its subcellular location is the preautophagosomal structure. It is found in the cytoplasm. In terms of biological role, component of the autophagy machinery that controls the major intracellular degradation process by which cytoplasmic materials are packaged into autophagosomes and delivered to lysosomes for degradation. Binds phosphatidylinositol 3-phosphate (PtdIns3P). Activated by the STK11/AMPK signaling pathway upon starvation, WDR45 is involved in autophagosome assembly downstream of WIPI2, regulating the size of forming autophagosomes. Together with WIPI1, promotes ATG2 (ATG2A or ATG2B)-mediated lipid transfer by enhancing ATG2-association with phosphatidylinositol 3-monophosphate (PI3P)-containing membranes. Probably recruited to membranes through its PtdIns3P activity. In Rattus norvegicus (Rat), this protein is WD repeat domain phosphoinositide-interacting protein 4 (Wdr45).